Here is a 192-residue protein sequence, read N- to C-terminus: Imidazole glycerol phosphate synthase subunit HisH (192 aa).

The Glutamine amidotransferase type-1 domain occupies 1–192 (MIAIIDYGLG…QALKGGFIND (192 aa)). The active-site Nucleophile is the C77. Active-site residues include H169 and E171.

Heterodimer of HisH and HisF.

Its subcellular location is the cytoplasm. The enzyme catalyses 5-[(5-phospho-1-deoxy-D-ribulos-1-ylimino)methylamino]-1-(5-phospho-beta-D-ribosyl)imidazole-4-carboxamide + L-glutamine = D-erythro-1-(imidazol-4-yl)glycerol 3-phosphate + 5-amino-1-(5-phospho-beta-D-ribosyl)imidazole-4-carboxamide + L-glutamate + H(+). The catalysed reaction is L-glutamine + H2O = L-glutamate + NH4(+). It functions in the pathway amino-acid biosynthesis; L-histidine biosynthesis; L-histidine from 5-phospho-alpha-D-ribose 1-diphosphate: step 5/9. Functionally, IGPS catalyzes the conversion of PRFAR and glutamine to IGP, AICAR and glutamate. The HisH subunit catalyzes the hydrolysis of glutamine to glutamate and ammonia as part of the synthesis of IGP and AICAR. The resulting ammonia molecule is channeled to the active site of HisF. The chain is Imidazole glycerol phosphate synthase subunit HisH from Staphylococcus epidermidis (strain ATCC 35984 / DSM 28319 / BCRC 17069 / CCUG 31568 / BM 3577 / RP62A).